The sequence spans 8886 residues: Obscurin (8886 aa).

Ig-like domains follow at residues 9–99 (PRFL…LRVD), 109–201 (PHFL…LVVD), 234–320 (PPSP…QTYS), and 329–415 (PTVP…AELS). Residues Cys30 and Cys81 are joined by a disulfide bond. Residues 135–165 (SPQPAVSWSKDGRRLGPPDAPHVRVEEHGES) form a disordered region. Residues 144–164 (KDGRRLGPPDAPHVRVEEHGE) show a composition bias toward basic and acidic residues. 2 cysteine pairs are disulfide-bonded: Cys257/Cys309 and Cys352/Cys402. A Phosphoserine modification is found at Ser393. In terms of domain architecture, Fibronectin type-III 1 spans 513-610 (PPADPVVKAK…FPGTMHLVPM (98 aa)). 43 consecutive Ig-like domains span residues 702–793 (PSSK…QDIT), 859–951 (PKLV…VAEP), 951–1043 (PKLV…VAEP), 1043–1135 (PKMV…VTEP), 1135–1227 (PKLV…VAEP), 1227–1319 (PKLV…VTEP), 1319–1407 (PKLV…FRLD), 1411–1503 (PKLV…VAEP), 1503–1595 (PKLV…VAEP), 1595–1687 (PKLA…VAEP), 1687–1779 (PKLA…VAEP), 1779–1871 (PKLA…VAEP), 1871–1963 (PKLM…VAEP), 1963–2051 (PKLV…FRLD), 2055–2147 (TRLM…VAEA), 2152–2241 (PERP…EEVA), 2242–2325 (AKFS…ARLT), 2329–2415 (PRVV…AALR), 2420–2504 (PVLF…AKLN), 2598–2681 (PVSF…ASLR), 2721–2812 (PVTL…QSIT), 2900–2984 (PVVL…AEVT), 3078–3162 (PVVF…SKVS), 3258–3342 (PVDI…AKLC), 3348–3431 (NRFT…ARLL), 3527–3610 (PSIF…SSIV), 3616–3700 (PVRF…ATLT), 3785–3876 (ATLT…ATLT), 3881–3964 (PAKF…ATLT), 4042–4125 (PTKF…ATLS), 4130–4213 (PSRF…ATLS), 4219–4301 (PRFI…ATLN), 4307–4389 (PRFI…AVLT), 4395–4477 (PKFT…ATLS), 4483–4565 (PRFI…ATLS), 4571–4653 (PRFI…ATLS), 4659–4741 (PRFI…ATLS), 4746–4829 (PAKF…ATLS), 4833–4916 (PQVV…TSAT), 4923–5007 (PVRF…ARLS), 5013–5105 (PKFK…PEVT), 5378–5464 (LEVL…ARLS), and 5557–5659 (PQMV…TFNV). 14 cysteine pairs are disulfide-bonded: Cys885-Cys935, Cys977-Cys1027, Cys1069-Cys1119, Cys1161-Cys1211, Cys1253-Cys1303, Cys1345-Cys1395, Cys1437-Cys1487, Cys1529-Cys1579, Cys1621-Cys1671, Cys1713-Cys1763, Cys1805-Cys1855, Cys1897-Cys1947, Cys1989-Cys2039, and Cys2081-Cys2131. An intrachain disulfide couples Cys2263 to Cys2313. 8 disulfide bridges follow: Cys2620-Cys2669, Cys2743-Cys2793, Cys2922-Cys2972, Cys3100-Cys3150, Cys3280-Cys3330, Cys3369-Cys3419, Cys3549-Cys3599, and Cys3638-Cys3688. Residue Ser3321 is modified to Phosphoserine. The residue at position 3802 (Ser3802) is a Phosphoserine. Intrachain disulfides connect Cys3815-Cys3864, Cys3903-Cys3952, Cys4064-Cys4113, Cys4152-Cys4201, Cys4240-Cys4289, Cys4328-Cys4377, Cys4416-Cys4465, Cys4504-Cys4553, Cys4592-Cys4641, Cys4680-Cys4729, Cys4768-Cys4817, Cys4856-Cys4906, Cys4945-Cys4995, and Cys5034-Cys5086. Residue Ser4960 is modified to Phosphoserine. One can recognise a Fibronectin type-III 2 domain in the interval 5471-5569 (PPEDAEVVGR…VKIAPAPAPA (99 aa)). Cys5590 and Cys5643 are joined by a disulfide. Residue Ser5699 is modified to Phosphoserine. The segment at 5700 to 5736 (REPTLDSISELPEEDSRVQHLRQEAEETAPDLSEGYS) is disordered. Thr5703 carries the phosphothreonine modification. Position 5706 is a phosphoserine (Ser5706). Residues 5713–5724 (EDSRVQHLRQEA) are compositionally biased toward basic and acidic residues. Thr5737 carries the phosphothreonine modification. Ser5754 is modified (phosphoserine). In terms of domain architecture, IQ spans 5821-5850 (LDKAAVKIQAAFKGYKVRKEMKQQEGPVFS). Residues 5847 to 5930 (PVFSRTFGDT…QVSTKSGRVS (84 aa)) form the Ig-like 48 domain. A disulfide bond links Cys5868 and Cys5920. The disordered stretch occupies residues 5977-5996 (EEELFLSADEGPGEPEEPAD). Ig-like domains follow at residues 6077–6166 (PVFL…AELR), 6209–6298 (PQVL…ARLL), and 6320–6416 (PRIL…LHIS). Cys6098 and Cys6150 form a disulfide bridge. Residues 6504–6546 (KLQVPGGDSDEETKTPSASPRHGRSRPSSSVQESSSESEDGDS) form a disordered region. Position 6512 is a phosphoserine (Ser6512). Thr6518 carries the post-translational modification Phosphothreonine. Residues 6519–6538 (PSASPRHGRSRPSSSVQESS) are compositionally biased toward low complexity. Phosphoserine occurs at positions 6520 and 6522. Residues 6549–6616 (EIFDIYVVTA…SPAYLDKRLK (68 aa)) form the SH3 domain. Residues 6642–6826 (RLSSVIQELL…SALPQRAENK (185 aa)) enclose the DH domain. One can recognise a PH domain in the interval 6844–6953 (EPIRQGHFIV…WVKEICGIQQ (110 aa)). Arg6924 is a binding site for a 1,2-diacyl-sn-glycero-3-phospho-(1D-myo-inositol-4,5-bisphosphate). A 1,2-diacyl-sn-glycero-3-phospho-(1D-myo-inositol-3,4-bisphosphate) is bound at residue Arg6929. Ig-like domains follow at residues 6963–7046 (PEFE…GNAS) and 7057–7147 (PRFV…GELY). Disulfide bonds link Cys6984-Cys7036 and Cys7078-Cys7131. The tract at residues 7200–7257 (ALGPSPGDLPNTRQSEPPAFEEAASQIPGAASGTPEVSQPGTHKGLEQETTSSGSQGW) is disordered. Residues 7247-7257 (QETTSSGSQGW) are compositionally biased toward polar residues. Residues 7306–7394 (PSMQVTIEDV…GQVLCKAELL (89 aa)) enclose the Ig-like 54 domain. The 254-residue stretch at 7416–7669 (YDVQEEIGRG…TSQCLAHPWF (254 aa)) folds into the Protein kinase 1 domain. ATP-binding positions include 7422 to 7430 (IGRGVFGFV) and Lys7445. The active-site Proton acceptor is the Asp7535. Disordered regions lie at residues 7717–7810 (GPPD…SPGC), 7879–8106 (EQAS…TTRK), and 8150–8180 (SSEE…VPLR). A Phosphoserine modification is found at Ser7779. The span at 7793–7804 (AAVPASPQSAGP) shows a compositional bias: low complexity. Residues 7941–7952 (TTAKDRGHKEGF) show a composition bias toward basic and acidic residues. Over residues 7986–7996 (SCHSELGSGSQ) the composition is skewed to polar residues. Low complexity-rich tracts occupy residues 8000–8014 (GPPS…PPQS) and 8053–8073 (GSLS…ASQV). Ser8161 carries the post-translational modification Phosphoserine. Positions 8380-8464 (KGRDQELSDE…VSNPLGTAVT (85 aa)) constitute an Ig-like 55 domain. The cysteines at positions 8401 and 8453 are disulfide-linked. Positions 8474–8566 (PSSSPRPEVG…PSEQVLLGGP (93 aa)) constitute a Fibronectin type-III 3 domain. Residues 8590–8842 (FAFQMQIRRG…ASTCLQCGWL (253 aa)) form the Protein kinase 2 domain. Residues 8596 to 8604 (IRRGRFSVV) and Lys8619 contribute to the ATP site. Asp8709 serves as the catalytic Proton acceptor.

The protein belongs to the protein kinase superfamily. CAMK Ser/Thr protein kinase family. In terms of assembly, interacts (via protein kinase domain 1) with CDH2 and (via protein kinase domain 1) with ATP1B1. Isoform 2 is found in a complex with DSG2, DESM, GJA1, CDH2 and VCL. Isoform 3 is found in a complex with DSG2, DESM, GJA1, CDH2, ANK3 and VCL. It depends on Mg(2+) as a cofactor. Post-translationally, autophosphorylated by protein kinase domain 1 and 2. Two small isoforms, one probably containing protein kinase domain 2 and a partial protein kinase domain 1 and one containing only protein kinase domain 2, are glycosylated. In terms of tissue distribution, expressed in skeletal muscles including flexor digitorum brevis (FDB), soleus and tibialis anterior muscles, and to a lesser extent in heart muscles (at protein level). Isoform 2 and isoform 3 are expressed in the myocardium (at protein level).

It is found in the cytoplasm. The protein localises to the myofibril. It localises to the sarcomere. The protein resides in the m line. Its subcellular location is the z line. It is found in the cell membrane. The protein localises to the sarcolemma. It localises to the nucleus. The protein resides in the secreted. The catalysed reaction is L-seryl-[protein] + ATP = O-phospho-L-seryl-[protein] + ADP + H(+). It catalyses the reaction L-threonyl-[protein] + ATP = O-phospho-L-threonyl-[protein] + ADP + H(+). Structural component of striated muscles which plays a role in myofibrillogenesis. Probably involved in the assembly of myosin into sarcomeric A bands in striated muscle. Has serine/threonine protein kinase activity and phosphorylates N-cadherin CDH2 and sodium/potassium-transporting ATPase subunit ATP1B1. Binds (via the PH domain) strongly to phosphatidylinositol 3,4-bisphosphate (PtdIns(3,4)P2) and phosphatidylinositol 4,5-bisphosphate (PtdIns(4,5)P2), and to a lesser extent to phosphatidylinositol 3-phosphate (PtdIns(3)P), phosphatidylinositol 4-phosphate (PtdIns(4)P), phosphatidylinositol 5-phosphate (PtdIns(5)P) and phosphatidylinositol 3,4,5-trisphosphate (PtdIns(3,4,5)P3). In terms of biological role, isoform 2 and isoform 3: bind phosphatidylinositol bisphosphates (PIP2s) via their PH domains and negatively regulate the PI3K/AKT/mTOR signaling pathway, thus contributing to the regulation of cardiomyocyte size and adhesion. This Mus musculus (Mouse) protein is Obscurin.